A 366-amino-acid polypeptide reads, in one-letter code: 3-dehydroquinate synthase (366 aa).

NAD(+)-binding positions include 75–80 (DGEQYK), 109–113 (GVIGD), 133–134 (TT), K146, K155, and 173–176 (CLST). Residues E188, H251, and H268 each contribute to the Zn(2+) site.

The protein belongs to the sugar phosphate cyclases superfamily. Dehydroquinate synthase family. It depends on Co(2+) as a cofactor. Zn(2+) serves as cofactor. NAD(+) is required as a cofactor.

Its subcellular location is the cytoplasm. It carries out the reaction 7-phospho-2-dehydro-3-deoxy-D-arabino-heptonate = 3-dehydroquinate + phosphate. It participates in metabolic intermediate biosynthesis; chorismate biosynthesis; chorismate from D-erythrose 4-phosphate and phosphoenolpyruvate: step 2/7. In terms of biological role, catalyzes the conversion of 3-deoxy-D-arabino-heptulosonate 7-phosphate (DAHP) to dehydroquinate (DHQ). The polypeptide is 3-dehydroquinate synthase (Vibrio campbellii (strain ATCC BAA-1116)).